Consider the following 463-residue polypeptide: Aurantioclavine synthase cnsA (463 aa).

The FAD-binding PCMH-type domain occupies 16–199 (ERFNQRGNVF…TQATVRVFPD (184 aa)).

Belongs to the oxygen-dependent FAD-linked oxidoreductase family. The cofactor is FAD.

It functions in the pathway alkaloid biosynthesis. Its function is as follows. FAD-linked oxidoreductase; part of the gene cluster that mediates the biosynthesis of communesins, a prominent class of indole alkaloids with great potential as pharmaceuticals. Communesins are biosynthesized by the coupling of tryptamine and aurantioclavine, two building blocks derived from L-tryptophan. The L-tryptophan decarboxylase cnsB converts L-tryptophan to tryptamine, whereas the tryptophan dimethylallyltransferase cnsF converts L-tryptophan to 4-dimethylallyl tryptophan which is further transformed to aurantioclavine by the aurantioclavine synthase cnsA, probably aided by the catalase cnsD. The cytochrome P450 monooxygenase cnsC catalyzes the heterodimeric coupling between the two different indole moieties, tryptamine and aurantioclavine, to construct vicinal quaternary stereocenters and yield the heptacyclic communesin scaffold. The O-methyltransferase cnsE then methylates the communesin scaffold to produce communesin K, the simplest characterized communesin that contains the heptacyclic core. The dioxygenase cnsJ converts communesin K into communesin I. Acylation to introduce the hexadienyl group at position N16 of communesin I by the acyltransferase cnsK leads to the production of communesin B. The hexadienyl group is produced by the highly reducing polyketide synthase cnsI, before being hydrolytically removed from cnsI by the serine hydrolase cnsH, converted into hexadienyl-CoA by the CoA ligase cnsG, and then transferred to communesin I by cnsK. Surprisingly, cnsK may also be a promiscuous acyltransferase that can tolerate a range of acyl groups, including acetyl-, propionyl-, and butyryl-CoA, which lead to communesins A, G and H respectively. The roles of the alpha-ketoglutarate-dependent dioxygenases cnsM and cnsP have still to be determined. The protein is Aurantioclavine synthase cnsA of Penicillium expansum (Blue mold rot fungus).